Reading from the N-terminus, the 390-residue chain is Matrix metalloproteinase-23 (390 aa).

Topologically, residues 1-19 (MGRGARVPSEAPGAGVERR) are cytoplasmic. Residues 1 to 78 (MGRGARVPSE…PGPLAPRRRR (78 aa)) constitute a propeptide that is removed on maturation. The chain crosses the membrane as a helical; Signal-anchor for type II membrane protein span at residues 20-40 (WLGAALVALCLLPALVLLARL). Residues 41-390 (GAPAVPAWSA…TYSWRVRVRG (350 aa)) lie on the Lumenal side of the membrane. 2 N-linked (GlcNAc...) asparagine glycosylation sites follow: N92 and N148. H211 lines the Zn(2+) pocket. E212 is a catalytic residue. The Zn(2+) site is built by H215 and H221. N-linked (GlcNAc...) asparagine glycosylation occurs at N232. The ShKT domain occupies 255–289 (CLDRLFVCASWARRGFCDARRRLMKRLCPSSCDFC). Intrachain disulfides connect C255/C289, C262/C282, and C271/C286. The region spanning 295-380 (PTVATTPPPP…VVRRQQRVLT (86 aa)) is the Ig-like C2-type domain. N-linked (GlcNAc...) asparagine glycosylation occurs at N316. Cysteines 321 and 370 form a disulfide.

It belongs to the peptidase M10A family. It depends on Zn(2+) as a cofactor. Post-translationally, N-glycosylated. Proteolytic cleavage might yield an active form. Predominantly expressed in ovary, testis and prostate.

The protein resides in the endoplasmic reticulum membrane. It localises to the membrane. Inhibited by TIMP2. Protease. May regulate the surface expression of some potassium channels by retaining them in the endoplasmic reticulum. The protein is Matrix metalloproteinase-23 (MMP23B) of Homo sapiens (Human).